Here is a 338-residue protein sequence, read N- to C-terminus: Adenylosuccinate synthetase (338 aa).

GTP-binding positions include glycine 12–lysine 18 and glycine 42–threonine 44. The active-site Proton acceptor is aspartate 13. Mg(2+) is bound by residues aspartate 13 and glycine 42. IMP-binding positions include aspartate 13–lysine 16, asparagine 40–histidine 43, threonine 127, arginine 141, glutamine 179, threonine 194, and arginine 256. Histidine 43 serves as the catalytic Proton donor. Threonine 252–arginine 258 provides a ligand contact to substrate. Residues arginine 258, cysteine 284–aspartate 286, and serine 324–glycine 326 contribute to the GTP site.

It belongs to the adenylosuccinate synthetase family. In terms of assembly, homodimer. Mg(2+) serves as cofactor.

The protein resides in the cytoplasm. The enzyme catalyses IMP + L-aspartate + GTP = N(6)-(1,2-dicarboxyethyl)-AMP + GDP + phosphate + 2 H(+). It functions in the pathway purine metabolism; AMP biosynthesis via de novo pathway; AMP from IMP: step 1/2. In terms of biological role, plays an important role in the de novo pathway of purine nucleotide biosynthesis. Catalyzes the first committed step in the biosynthesis of AMP from IMP. This Methanococcus maripaludis (strain C7 / ATCC BAA-1331) protein is Adenylosuccinate synthetase.